A 259-amino-acid chain; its full sequence is Putative deoxyribonuclease TATDN1 homolog (259 aa).

Residues E82, H116, H138, and D186 each coordinate a divalent metal cation.

It belongs to the metallo-dependent hydrolases superfamily. TatD-type hydrolase family. It depends on a divalent metal cation as a cofactor.

Its subcellular location is the nucleus. In terms of biological role, putative deoxyribonuclease. The chain is Putative deoxyribonuclease TATDN1 homolog from Vairimorpha ceranae (strain BRL01) (Microsporidian parasite).